Here is a 254-residue protein sequence, read N- to C-terminus: Floral homeotic protein APETALA 1 (254 aa).

In terms of domain architecture, MADS-box spans 3–57 (RGRVQLKRIENKINRQVTFSKRRAGLLKKAHEISVLCDAEVALVVFSHKGKLFEY). Residues 88–178 (NTNWSMEYNR…SKQIKEREKI (91 aa)) form the K-box domain.

It is found in the nucleus. Its function is as follows. Controls floral meristem identity. Is also required for normal development of sepals and petals. Is required for the transition of an influorescence meristem into a floral meristem. Interacts with LEAFY. The chain is Floral homeotic protein APETALA 1 (AP1) from Sinapis alba (White mustard).